We begin with the raw amino-acid sequence, 299 residues long: Oxaloacetate decarboxylase (299 aa).

S57 contributes to the substrate binding site. D95 contacts Mg(2+). Substrate-binding residues include R167 and H243.

It belongs to the isocitrate lyase/PEP mutase superfamily. Oxaloacetate decarboxylase family. As to quaternary structure, homotetramer; dimer of dimers. Requires Mg(2+) as cofactor.

It catalyses the reaction oxaloacetate + H(+) = pyruvate + CO2. Functionally, catalyzes the decarboxylation of oxaloacetate into pyruvate. Seems to play a role in maintaining cellular concentrations of bicarbonate and pyruvate. This is Oxaloacetate decarboxylase from Paraburkholderia xenovorans (strain LB400).